The primary structure comprises 551 residues: Hydroxylamine reductase (551 aa).

Positions 3, 6, 18, and 25 each coordinate [2Fe-2S] cluster. Positions 249, 273, 317, 405, 433, 459, 493, and 495 each coordinate hybrid [4Fe-2O-2S] cluster. A Cysteine persulfide modification is found at Cys405.

The protein belongs to the HCP family. [2Fe-2S] cluster is required as a cofactor. Requires hybrid [4Fe-2O-2S] cluster as cofactor.

The protein resides in the cytoplasm. The enzyme catalyses A + NH4(+) + H2O = hydroxylamine + AH2 + H(+). Its function is as follows. Catalyzes the reduction of hydroxylamine to form NH(3) and H(2)O. The chain is Hydroxylamine reductase from Actinobacillus pleuropneumoniae serotype 7 (strain AP76).